Consider the following 288-residue polypeptide: 4-hydroxy-tetrahydrodipicolinate synthase (288 aa).

A pyruvate-binding site is contributed by T42. Y129 functions as the Proton donor/acceptor in the catalytic mechanism. K157 (schiff-base intermediate with substrate) is an active-site residue. I198 provides a ligand contact to pyruvate.

Belongs to the DapA family. In terms of assembly, homotetramer; dimer of dimers.

It is found in the cytoplasm. It carries out the reaction L-aspartate 4-semialdehyde + pyruvate = (2S,4S)-4-hydroxy-2,3,4,5-tetrahydrodipicolinate + H2O + H(+). The protein operates within amino-acid biosynthesis; L-lysine biosynthesis via DAP pathway; (S)-tetrahydrodipicolinate from L-aspartate: step 3/4. In terms of biological role, catalyzes the condensation of (S)-aspartate-beta-semialdehyde [(S)-ASA] and pyruvate to 4-hydroxy-tetrahydrodipicolinate (HTPA). In Chlamydia abortus (strain DSM 27085 / S26/3) (Chlamydophila abortus), this protein is 4-hydroxy-tetrahydrodipicolinate synthase.